The sequence spans 143 residues: Large ribosomal subunit protein uL11 (143 aa).

It belongs to the universal ribosomal protein uL11 family. As to quaternary structure, part of the ribosomal stalk of the 50S ribosomal subunit. Interacts with L10 and the large rRNA to form the base of the stalk. L10 forms an elongated spine to which L12 dimers bind in a sequential fashion forming a multimeric L10(L12)X complex. One or more lysine residues are methylated.

Functionally, forms part of the ribosomal stalk which helps the ribosome interact with GTP-bound translation factors. This Psychrobacter sp. (strain PRwf-1) protein is Large ribosomal subunit protein uL11.